Here is a 113-residue protein sequence, read N- to C-terminus: Cell division protein FtsB (113 aa).

Topologically, residues 1–3 (MRL) are cytoplasmic. A helical membrane pass occupies residues 4–21 (ISLLLFVLLLAIQYPLWL). The Periplasmic segment spans residues 22–113 (GKGGWLRVWE…PNSPAATGRH (92 aa)). Residues 34 to 63 (HQVQEQATRNQMLKLRNAKLEGEVKDLQDG) adopt a coiled-coil conformation. Residues 93–113 (KVSATPPLPPPPNSPAATGRH) form a disordered region.

Belongs to the FtsB family. As to quaternary structure, part of a complex composed of FtsB, FtsL and FtsQ.

Its subcellular location is the cell inner membrane. Its function is as follows. Essential cell division protein. May link together the upstream cell division proteins, which are predominantly cytoplasmic, with the downstream cell division proteins, which are predominantly periplasmic. The polypeptide is Cell division protein FtsB (Cupriavidus pinatubonensis (strain JMP 134 / LMG 1197) (Cupriavidus necator (strain JMP 134))).